A 282-amino-acid polypeptide reads, in one-letter code: Shikimate dehydrogenase (NADP(+)) (282 aa).

Shikimate is bound by residues 19–21 (TQS) and Thr66. Lys70 serves as the catalytic Proton acceptor. 2 residues coordinate shikimate: Asn91 and Asp107. Residues 132–136 (GAGGA), 155–160 (NRTITR), Ile224, and Gly246 contribute to the NADP(+) site.

The protein belongs to the shikimate dehydrogenase family. As to quaternary structure, homodimer.

It catalyses the reaction shikimate + NADP(+) = 3-dehydroshikimate + NADPH + H(+). It functions in the pathway metabolic intermediate biosynthesis; chorismate biosynthesis; chorismate from D-erythrose 4-phosphate and phosphoenolpyruvate: step 4/7. Its function is as follows. Involved in the biosynthesis of the chorismate, which leads to the biosynthesis of aromatic amino acids. Catalyzes the reversible NADPH linked reduction of 3-dehydroshikimate (DHSA) to yield shikimate (SA). The protein is Shikimate dehydrogenase (NADP(+)) of Buchnera aphidicola subsp. Baizongia pistaciae (strain Bp).